The chain runs to 315 residues: MLGLNHTSMSEFILVGFSAFPHLQLMLFLLFLLMYLFTLLGNLLIMATVWSERSLHTPMYLFLCVLSVSEILYTVAIIPRMLADLLSTQRSIAFLACASQMFFSFSFGFTHSFLLTVMGYDRYVAICHPLRYNVLMSPRGCACLVGCSWAGGSVMGMVVTSAIFQLTFCGSHEIQHFLCHVPPLLKLACGNNVPAVALGVGLVCIMALLGCFLLILLSYAFIVADILKIPSAEGRNKAFSTCASHLIVVIVHYGFASVIYLKPKGPHSQEGDTLMATTYAVLTPFLSPIIFSLRNKELKVAMKRTFLSTLYSSGT.

Residues 1–25 are Extracellular-facing; that stretch reads MLGLNHTSMSEFILVGFSAFPHLQL. A glycan (N-linked (GlcNAc...) asparagine) is linked at Asn-5. Residues 26–46 form a helical membrane-spanning segment; that stretch reads MLFLLFLLMYLFTLLGNLLIM. At 47–54 the chain is on the cytoplasmic side; the sequence is ATVWSERS. Residues 55–75 traverse the membrane as a helical segment; the sequence is LHTPMYLFLCVLSVSEILYTV. Residues 76–99 lie on the Extracellular side of the membrane; it reads AIIPRMLADLLSTQRSIAFLACAS. A disulfide bridge connects residues Cys-97 and Cys-189. The chain crosses the membrane as a helical span at residues 100–120; sequence QMFFSFSFGFTHSFLLTVMGY. Over 121–139 the chain is Cytoplasmic; it reads DRYVAICHPLRYNVLMSPR. A helical membrane pass occupies residues 140–160; that stretch reads GCACLVGCSWAGGSVMGMVVT. At 161–197 the chain is on the extracellular side; it reads SAIFQLTFCGSHEIQHFLCHVPPLLKLACGNNVPAVA. A helical transmembrane segment spans residues 198–218; the sequence is LGVGLVCIMALLGCFLLILLS. Over 219–238 the chain is Cytoplasmic; the sequence is YAFIVADILKIPSAEGRNKA. Residues 239–259 traverse the membrane as a helical segment; sequence FSTCASHLIVVIVHYGFASVI. The Extracellular portion of the chain corresponds to 260-272; sequence YLKPKGPHSQEGD. Residues 273 to 293 traverse the membrane as a helical segment; that stretch reads TLMATTYAVLTPFLSPIIFSL. The Cytoplasmic segment spans residues 294–315; it reads RNKELKVAMKRTFLSTLYSSGT.

It belongs to the G-protein coupled receptor 1 family.

It is found in the cell membrane. Functionally, odorant receptor. The sequence is that of Olfactory receptor 10H2 (OR10H2) from Homo sapiens (Human).